We begin with the raw amino-acid sequence, 124 residues long: Small ribosomal subunit protein uS11 (124 aa).

Belongs to the universal ribosomal protein uS11 family. In terms of assembly, part of the 30S ribosomal subunit. Interacts with proteins S7 and S18. Binds to IF-3.

Functionally, located on the platform of the 30S subunit, it bridges several disparate RNA helices of the 16S rRNA. Forms part of the Shine-Dalgarno cleft in the 70S ribosome. In Anaplasma marginale (strain St. Maries), this protein is Small ribosomal subunit protein uS11.